The chain runs to 232 residues: Flagellar L-ring protein (232 aa).

The first 21 residues, 1–21, serve as a signal peptide directing secretion; sequence MQKYALHAYPVMALMVATLTG. Residue Cys-22 is the site of N-palmitoyl cysteine attachment. A lipid anchor (S-diacylglycerol cysteine) is attached at Cys-22.

This sequence belongs to the FlgH family. In terms of assembly, the basal body constitutes a major portion of the flagellar organelle and consists of four rings (L,P,S, and M) mounted on a central rod.

It is found in the cell outer membrane. The protein localises to the bacterial flagellum basal body. In terms of biological role, assembles around the rod to form the L-ring and probably protects the motor/basal body from shearing forces during rotation. The sequence is that of Flagellar L-ring protein from Salmonella choleraesuis (strain SC-B67).